The primary structure comprises 369 residues: Biglycan (369 aa).

A signal peptide spans 1–16; that stretch reads MCPLWLLTLLLALSQA. Residues 17–37 constitute a propeptide that is removed on maturation; sequence LPFEQKGFWDFTLDDGLLMMN. O-linked (Xyl...) (glycosaminoglycan) serine glycans are attached at residues S42 and S48. 2 disulfide bridges follow: C64-C70 and C68-C77. 12 LRR repeats span residues 83–103, 104–127, 128–151, 152–172, 173–196, 197–221, 222–242, 243–266, 267–290, 291–313, 314–343, and 344–369; these read KTVP…NNDI, SELR…NNKI, SKIH…KNHL, VEIP…DNRI, RKVP…GNPL, ENSG…EAKL, TGIP…HNKI, QAIE…HNQI, RMIE…NNKL, SRVP…SNNI, TKVG…NNPV, and PYWE…NYKK. Residues N271 and N312 are each glycosylated (N-linked (GlcNAc...) asparagine). Residues C322 and C355 are joined by a disulfide bond.

It belongs to the small leucine-rich proteoglycan (SLRP) family. SLRP class I subfamily. In terms of processing, the two attached glycosaminoglycan chains can be either chondroitin sulfate or dermatan sulfate. As to expression, found in several connective tissues, especially in articular cartilages.

The protein resides in the secreted. Its subcellular location is the extracellular space. It localises to the extracellular matrix. May be involved in collagen fiber assembly. This Mus musculus (Mouse) protein is Biglycan (Bgn).